The chain runs to 192 residues: Peptidyl-tRNA hydrolase (192 aa).

Position 17 (Tyr-17) interacts with tRNA. Catalysis depends on His-22, which acts as the Proton acceptor. The tRNA site is built by Tyr-68, Asn-70, and Asn-116.

It belongs to the PTH family. Monomer.

Its subcellular location is the cytoplasm. It carries out the reaction an N-acyl-L-alpha-aminoacyl-tRNA + H2O = an N-acyl-L-amino acid + a tRNA + H(+). In terms of biological role, hydrolyzes ribosome-free peptidyl-tRNAs (with 1 or more amino acids incorporated), which drop off the ribosome during protein synthesis, or as a result of ribosome stalling. Its function is as follows. Catalyzes the release of premature peptidyl moieties from peptidyl-tRNA molecules trapped in stalled 50S ribosomal subunits, and thus maintains levels of free tRNAs and 50S ribosomes. This chain is Peptidyl-tRNA hydrolase, found in Mycolicibacterium gilvum (strain PYR-GCK) (Mycobacterium gilvum (strain PYR-GCK)).